The sequence spans 288 residues: Diaminopimelate epimerase (288 aa).

The substrate site is built by Asn14 and Asn67. Cys76 acts as the Proton donor in catalysis. Substrate is bound by residues 77–78, Asn166, Asn199, and 217–218; these read GN and ER. Catalysis depends on Cys226, which acts as the Proton acceptor. 227–228 is a substrate binding site; it reads GT.

This sequence belongs to the diaminopimelate epimerase family. As to quaternary structure, homodimer.

The protein resides in the cytoplasm. It carries out the reaction (2S,6S)-2,6-diaminopimelate = meso-2,6-diaminopimelate. Its pathway is amino-acid biosynthesis; L-lysine biosynthesis via DAP pathway; DL-2,6-diaminopimelate from LL-2,6-diaminopimelate: step 1/1. In terms of biological role, catalyzes the stereoinversion of LL-2,6-diaminopimelate (L,L-DAP) to meso-diaminopimelate (meso-DAP), a precursor of L-lysine and an essential component of the bacterial peptidoglycan. The polypeptide is Diaminopimelate epimerase (Bacillus cereus (strain 03BB102)).